We begin with the raw amino-acid sequence, 215 residues long: MSRVYDWFEERLEIQAIADDVSSKYVPPHVNIFYCLGGITFTCFIIQVATGFAMTFYYRPTVTEAFLSVKYIMNEVNFGWLIRSIHRWSASMMVLMMILHVCRVYLTGGFKKPRELTWVTGIILAILTVSFGVTGYSLPWDQVGYWAVKIVTGVPEAIPLIGNFIVELLRGSVSVGQSTLTRFYSLHTFVLPLLTATFMLGHFLMIRKQGISGPL.

The chain crosses the membrane as a helical span at residues I32 to F52. Position 35 (C35) interacts with heme c. Heme b is bound by residues H86 and H100. 3 helical membrane-spanning segments follow: residues A90 to F110, L116 to Y136, and L186 to I206. Residues H187 and H202 each contribute to the heme b site.

This sequence belongs to the cytochrome b family. PetB subfamily. In terms of assembly, the 4 large subunits of the cytochrome b6-f complex are cytochrome b6, subunit IV (17 kDa polypeptide, PetD), cytochrome f and the Rieske protein, while the 4 small subunits are PetG, PetL, PetM and PetN. The complex functions as a dimer. It depends on heme b as a cofactor. Requires heme c as cofactor.

It localises to the plastid. The protein localises to the chloroplast thylakoid membrane. Functionally, component of the cytochrome b6-f complex, which mediates electron transfer between photosystem II (PSII) and photosystem I (PSI), cyclic electron flow around PSI, and state transitions. This is Cytochrome b6 from Euglena gracilis.